The chain runs to 179 residues: DELTA-actitoxin-Afr1a (179 aa).

An N-terminal alpha-helix that contributes to the pore region spans residues 1 to 29 (SADVAGAVIDGAGLGFDVLKTVLEALGNV). R31 contacts an N-(acyl)-sphingosylphosphocholine. N-acetyl-D-glucosamine 6-sulfate is bound by residues Y51 and R53. R53, S54, R79, G85, Y108, Y113, S114, W116, Y133, Y137, Y138, R144, and G168 together coordinate an N-(acyl)-sphingosylphosphocholine. Residues 105-120 (SVPYDYNWYSNWWNVR) are trp-rich region, which is important for the binding to lipid membrane. Residue Y138 participates in N-acetyl-D-glucosamine 6-sulfate binding. The short motif at 144–146 (RGD) is the Cell attachment site, crucial for protein stability element.

Belongs to the actinoporin family. Sea anemone subfamily. As to quaternary structure, octamer or nonamer in membranes. Monomer in the soluble state.

The protein localises to the secreted. Its subcellular location is the nematocyst. It localises to the target cell membrane. Functionally, pore-forming toxin (PFT) that consists of a crown-shaped octamer or nonamer that forms cation-selective hydrophilic pores of about 1.5 nm (inside) and 13 nm (outside). It causes cardiac stimulation and cytolysis (EC(50)=1.6 nM on erythrocytes). Interestingly, the Phe-16 is crucial for hemolysis. Pore formation is a multi-step process that involves specific recognition of membrane sphingomyelin (but neither cholesterol nor phosphatidylcholine) using aromatic rich region and adjacent phosphocholine (POC) binding site, firm binding to the membrane (mainly driven by hydrophobic interactions) accompanied by the transfer of the N-terminal region to the lipid-water interface and finally pore formation after oligomerization of monomers. It is probable that a dimeric form is an assembly intermediate before the complete oligomerization. The formation of stable pores occurs only in vesicles composed of DOPC/SM (there is no oligomerization when the PFT is treated with vesicles of DOPC or SM alone). The transmembrane pore displays 8 lateral perforations, one at each subunit-subunit interface, partially occupied by the acyl-chain region of a bridging lipid. Each pore contains 24 lipid molecules, firmly bound to each subunit, that is, 3 lipids (L1, L2, L3, L4 and/or L5) are associated to each subunit. Lipid L1 bridges 2 subunits, whereas lipids L2 and L3 bind to sites at single subunit. The chain is DELTA-actitoxin-Afr1a from Actinia fragacea (Strawberry anemone).